The chain runs to 287 residues: Protein HEXIM2 (287 aa).

Disordered stretches follow at residues 1–212 (MKDW…RSKE) and 266–287 (RLRQ…QPGS). Ser31 is subject to Phosphoserine. 2 positions are modified to phosphothreonine: Thr34 and Thr48. 5 positions are modified to phosphoserine: Ser53, Ser55, Ser73, Ser78, and Ser83. Positions 89 to 105 (ARKKHRRRPSKRKRHWR) are enriched in basic residues. The segment covering 115–134 (KQQRDERQSQRASRVREEMF) has biased composition (basic and acidic residues). An interaction with P-TEFb region spans residues 142-145 (PYNT). Basic and acidic residues-rich tracts occupy residues 181–212 (GQGR…RSKE) and 266–280 (RLRQ…EGGR). A coiled-coil region spans residues 208-278 (GRSKEELVRD…QENEMWNREG (71 aa)). Residues 227–287 (QAEEEMRRLR…GGRRGGQPGS (61 aa)) are interaction with CCNT1, HEXIM1 and HEXIM2.

The protein belongs to the HEXIM family. Homooligomer and heterooligomer with HEXIM1; probably dimeric. Core component of the 7SK RNP complex, at least composed of 7SK RNA, LARP7, MEPCE, HEXIM1 (or HEXIM2) and P-TEFb (composed of CDK9 and CCNT1/cyclin-T1). Interacts with CCNT2.

It is found in the nucleus. Functionally, transcriptional regulator which functions as a general RNA polymerase II transcription inhibitor. Core component of the 7SK RNP complex: in cooperation with 7SK snRNA sequesters P-TEFb in a large inactive 7SK snRNP complex preventing RNA polymerase II phosphorylation and subsequent transcriptional elongation. The polypeptide is Protein HEXIM2 (HEXIM2) (Bos taurus (Bovine)).